A 219-amino-acid chain; its full sequence is Probable transcriptional regulator flp (219 aa).

An HTH crp-type domain is found at 144 to 212 (DSINVRLTHY…GKQVRILNAE (69 aa)). Positions 191-210 (KRLAEEKLIERSGKQVRILN) form a DNA-binding region, H-T-H motif.

The protein is Probable transcriptional regulator flp (flp) of Lacticaseibacillus casei (Lactobacillus casei).